Here is a 291-residue protein sequence, read N- to C-terminus: MSWFESLILGLVQGLTEFLPVSSSAHLRLTAAFAGWEDPGAAFTAITQIGTEAAVLIYFRKDIARIISAWFRSLVNKEMRHDHDAQMGWLVIVGSIPIGVLGVTLKDQIEGPFRDLRITATMLIVMGVILGIADRLAARDETGGKHRAAKERKKLQDLNIRDGLVFGACQAMALIPGVSRSGATISGGLLIGYTRESAARYSFLLAIPAVLASGVFELKDAAASGHVAWGPTVFATVIAFVSGYAVIAWFMKFISNKSFMPFVWYRIALGIAIIALVATGALSPHAAESAG.

6 helical membrane-spanning segments follow: residues 39–59, 85–105, 118–138, 203–223, 231–251, and 262–282; these read PGAA…LIYF, AQMG…GVTL, ITAT…RLAA, FLLA…DAAA, PTVF…AWFM, and FVWY…TGAL.

Belongs to the UppP family.

Its subcellular location is the cell membrane. It carries out the reaction di-trans,octa-cis-undecaprenyl diphosphate + H2O = di-trans,octa-cis-undecaprenyl phosphate + phosphate + H(+). Its function is as follows. Catalyzes the dephosphorylation of undecaprenyl diphosphate (UPP). Confers resistance to bacitracin. The polypeptide is Undecaprenyl-diphosphatase 2 (Streptomyces avermitilis (strain ATCC 31267 / DSM 46492 / JCM 5070 / NBRC 14893 / NCIMB 12804 / NRRL 8165 / MA-4680)).